Here is a 1168-residue protein sequence, read N- to C-terminus: Transcription-repair-coupling factor (1168 aa).

The region spanning 633 to 794 is the Helicase ATP-binding domain; sequence DMQKSRPMDR…MLGVRDLSVI (162 aa). 646–653 serves as a coordination point for ATP; sequence GDVGYGKT. The DEEQ box signature appears at 747 to 750; sequence DEEQ. Residues 808–969 form the Helicase C-terminal domain; sequence VLEQNMSFIK…GFKIAMRDLN (162 aa).

This sequence in the N-terminal section; belongs to the UvrB family. It in the C-terminal section; belongs to the helicase family. RecG subfamily.

The protein resides in the cytoplasm. Its function is as follows. Couples transcription and DNA repair by recognizing RNA polymerase (RNAP) stalled at DNA lesions. Mediates ATP-dependent release of RNAP and its truncated transcript from the DNA, and recruitment of nucleotide excision repair machinery to the damaged site. This is Transcription-repair-coupling factor from Staphylococcus aureus (strain MSSA476).